Consider the following 3127-residue polypeptide: Probable polyketide synthase 33 (3127 aa).

Positions serine 24 to glutamate 457 constitute a Ketosynthase family 3 (KS3) domain. Active-site for beta-ketoacyl synthase activity residues include cysteine 196, histidine 335, and histidine 380. Residues glycine 660–tyrosine 693 are acyl/malonyl transferase. The active-site For acyl/malonyl transferase activity is the serine 670. The interval glycine 958 to isoleucine 1080 is N-terminal hotdog fold. The PKS/mFAS DH domain occupies glycine 958 to serine 1257. Histidine 992 (proton acceptor; for dehydratase activity) is an active-site residue. Positions asparagine 1096–serine 1257 are C-terminal hotdog fold. The Proton donor; for dehydratase activity role is filled by aspartate 1168. The disordered stretch occupies residues serine 1369–tyrosine 1394. Over residues asparagine 1370–tyrosine 1394 the composition is skewed to low complexity. Residues serine 2539–histidine 2616 form the Carrier domain. At serine 2576 the chain carries O-(pantetheine 4'-phosphoryl)serine. The disordered stretch occupies residues asparagine 2617–asparagine 2659. Positions asparagine 2617–phenylalanine 2671 form a coiled coil. The chain crosses the membrane as a helical span at residues valine 2937–phenylalanine 2957.

The cofactor is pantetheine 4'-phosphate.

It localises to the membrane. Probable polyketide synthase. This chain is Probable polyketide synthase 33 (pks33), found in Dictyostelium discoideum (Social amoeba).